The following is a 1100-amino-acid chain: Formin-like protein 1 (1100 aa).

The span at methionine 1 to glycine 13 shows a compositional bias: low complexity. Disordered stretches follow at residues methionine 1 to alanine 31, serine 167 to arginine 200, arginine 446 to serine 474, and threonine 510 to proline 635. A lipid anchor (N-myristoyl glycine) is attached at glycine 2. At serine 7 the chain carries Phosphoserine. A compositionally biased stretch (pro residues) spans proline 14–proline 28. The GBD/FH3 domain occupies glutamine 27 to alanine 468. Serine 184 is subject to Phosphoserine. Positions proline 517 to proline 538 are enriched in low complexity. Residues glycine 539 to proline 615 are compositionally biased toward pro residues. Phosphoserine is present on residues serine 624 and serine 693. An FH2 domain is found at alanine 632–lysine 1023. Residues lysine 1008 to arginine 1037 form a disordered region. A compositionally biased stretch (low complexity) spans alanine 1013–lysine 1023. Serine 1031 carries the phosphoserine modification. The DAD domain occupies serine 1059 to cysteine 1090.

The protein belongs to the formin homology family. Interacts with RAC1, PFN1 and PFN2. Interacts (activated by RAC1) with SRGAP2 (via SH3 domain); regulates the actin filament severing activity of FMNL1. Post-translationally, myristoylation mediates membrane localization and blebbing. As to expression, expressed in heart, brain, placenta, lung, liver, skeletal muscle, kidney and pancreas.

The protein localises to the cytoplasm. Its subcellular location is the cell membrane. The protein resides in the cytoplasmic vesicle. It localises to the phagosome. It is found in the cell cortex. The protein localises to the cell projection. Its subcellular location is the bleb. In terms of biological role, may play a role in the control of cell motility and survival of macrophages. Plays a role in the regulation of cell morphology and cytoskeletal organization. Required in the cortical actin filament dynamics and cell shape. This Homo sapiens (Human) protein is Formin-like protein 1 (FMNL1).